Reading from the N-terminus, the 562-residue chain is Formate--tetrahydrofolate ligase (562 aa).

Residue threonine 71–serine 78 participates in ATP binding.

This sequence belongs to the formate--tetrahydrofolate ligase family.

It carries out the reaction (6S)-5,6,7,8-tetrahydrofolate + formate + ATP = (6R)-10-formyltetrahydrofolate + ADP + phosphate. It participates in one-carbon metabolism; tetrahydrofolate interconversion. The sequence is that of Formate--tetrahydrofolate ligase from Bacillus cereus (strain G9842).